Reading from the N-terminus, the 258-residue chain is uncharacterized protein (258 aa).

The helical transmembrane segment at 163–187 threads the bilayer; sequence GIVGAAGLMLMFADLNGIPGICLMG.

Its subcellular location is the membrane. This is an uncharacterized protein from Methanocaldococcus jannaschii (strain ATCC 43067 / DSM 2661 / JAL-1 / JCM 10045 / NBRC 100440) (Methanococcus jannaschii).